The primary structure comprises 503 residues: Lysine--tRNA ligase (503 aa).

Mg(2+)-binding residues include glutamate 414 and glutamate 421.

Belongs to the class-II aminoacyl-tRNA synthetase family. As to quaternary structure, homodimer. It depends on Mg(2+) as a cofactor.

It is found in the cytoplasm. The enzyme catalyses tRNA(Lys) + L-lysine + ATP = L-lysyl-tRNA(Lys) + AMP + diphosphate. This is Lysine--tRNA ligase from Neisseria gonorrhoeae (strain NCCP11945).